Here is a 262-residue protein sequence, read N- to C-terminus: Phosphatidylglycerol--prolipoprotein diacylglyceryl transferase (262 aa).

The next 4 membrane-spanning stretches (helical) occupy residues 17-37 (LAIH…YALG), 57-77 (LIFY…VLFY), 95-115 (GGMS…LFAH), and 119-139 (LGFF…LAAG). R140 is an a 1,2-diacyl-sn-glycero-3-phospho-(1'-sn-glycerol) binding site. A run of 3 helical transmembrane segments spans residues 173 to 193 (PSQL…LWWY), 200 to 220 (AGQV…LVEF), and 227 to 247 (FLGL…PMVL).

The protein belongs to the Lgt family.

It is found in the cell inner membrane. The catalysed reaction is L-cysteinyl-[prolipoprotein] + a 1,2-diacyl-sn-glycero-3-phospho-(1'-sn-glycerol) = an S-1,2-diacyl-sn-glyceryl-L-cysteinyl-[prolipoprotein] + sn-glycerol 1-phosphate + H(+). Its pathway is protein modification; lipoprotein biosynthesis (diacylglyceryl transfer). Its function is as follows. Catalyzes the transfer of the diacylglyceryl group from phosphatidylglycerol to the sulfhydryl group of the N-terminal cysteine of a prolipoprotein, the first step in the formation of mature lipoproteins. This Bordetella bronchiseptica (strain ATCC BAA-588 / NCTC 13252 / RB50) (Alcaligenes bronchisepticus) protein is Phosphatidylglycerol--prolipoprotein diacylglyceryl transferase.